A 510-amino-acid polypeptide reads, in one-letter code: Gallate 1-beta-glucosyltransferase (510 aa).

The Proton acceptor role is filled by H19. H19 provides a ligand contact to an anthocyanidin. 6 residues coordinate UDP-alpha-D-glucose: Q343, H358, W361, N362, S363, and E366. An an anthocyanidin-binding site is contributed by G381. UDP-alpha-D-glucose-binding residues include D382 and Q383.

This sequence belongs to the UDP-glycosyltransferase family. Expressed in swelling buds and young leaves.

The catalysed reaction is 3,4,5-trihydroxybenzoate + UDP-alpha-D-glucose = 1-O-galloyl-beta-D-glucose + UDP. The enzyme catalyses vanillate + UDP-alpha-D-glucose = 1-O-(4-hydroxy-3-methoxybenzoyl)-beta-D-glucose + UDP. It catalyses the reaction 3,4-dihydroxybenzoate + UDP-alpha-D-glucose = 1-O-(3,4-dihydroxy-benzoyl)-beta-D-glucose + UDP. Its function is as follows. Glucosyltransferase that catalyzes the formation of 1-O-beta-D-glucose esters with hydroxybenzoic acids as preferred glucosyl acceptors. Has the highest activity with 3,4-dihydroxybenzoate, vanillate and gallate in vitro. Gallate is the predicted native substrate of the enzyme, which thus catalyzes the formation of 1-O-galloyl-beta-D-glucose, the first committed step of gallotannin biosynthesis. This Quercus robur (English oak) protein is Gallate 1-beta-glucosyltransferase.